Consider the following 580-residue polypeptide: (3S,6E)-nerolidol synthase 1, chloroplastic (580 aa).

The N-terminal 31 residues, 1-31 (MASSSWAFFKVFNPQIAPKSISHIGQSDLMQ), are a transit peptide targeting the chloroplast. 5 residues coordinate Mg(2+): aspartate 334, aspartate 338, aspartate 478, serine 482, and glutamate 486. The DDXXD motif motif lies at 334 to 338 (DDIFD).

The protein belongs to the terpene synthase family. Tpsg subfamily. Requires Mg(2+) as cofactor. The cofactor is Mn(2+).

The protein localises to the plastid. It is found in the chloroplast. It catalyses the reaction (2E,6E)-farnesyl diphosphate + H2O = (3S,6E)-nerolidol + diphosphate. It participates in secondary metabolite biosynthesis; terpenoid biosynthesis. In terms of biological role, involved in monoterpene (C10) and sesquiterpene (C15) biosynthesis. Converts geranyl diphosphate (GPP) into S-linalool and farnesyl diphosphate (FPP) into (3S)-E-nerolidol. Probably not expressed in wild strawberry species. The protein is (3S,6E)-nerolidol synthase 1, chloroplastic of Fragaria vesca (Woodland strawberry).